Consider the following 329-residue polypeptide: Protein-arginine N-acetylglucosaminyltransferase NleB (329 aa).

Residue R13 is glycosylated (N-beta-linked (GlcNAc) arginine; by autocatalysis). 48 to 50 (QWF) is a UDP-N-acetyl-alpha-D-glucosamine binding site. R53 carries an N-beta-linked (GlcNAc) arginine; by autocatalysis glycan. Y72 is a UDP-N-acetyl-alpha-D-glucosamine binding site. An N-beta-linked (GlcNAc) arginine; by autocatalysis glycan is attached at R159. Residue 219–222 (YLDA) participates in UDP-N-acetyl-alpha-D-glucosamine binding. The DXD motif motif lies at 221 to 223 (DAD). D223 is a Mn(2+) binding site. The active-site Proton acceptor is E253. The N-beta-linked (GlcNAc) arginine; by autocatalysis glycan is linked to R293. Mn(2+) is bound by residues N320 and S322. UDP-N-acetyl-alpha-D-glucosamine is bound by residues S322 and 327 to 329 (SSW).

This sequence belongs to the glycosyltransferase NleB family. The cofactor is Mn(2+). Auto-glycosylated: arginine GlcNAcylation is required for activity toward death domain-containing host target proteins.

The protein resides in the secreted. The protein localises to the host cell. The enzyme catalyses L-arginyl-[protein] + UDP-N-acetyl-alpha-D-glucosamine = N(omega)-(N-acetyl-beta-D-glucosaminyl)-L-arginyl-[protein] + UDP + H(+). Functionally, protein-arginine N-acetylglucosaminyltransferase effector that disrupts TNF signaling in infected cells, including NF-kappa-B signaling, apoptosis and necroptosis. Acts by catalyzing the transfer of a single N-acetylglucosamine (GlcNAc) to a conserved arginine residue in the death domain of host proteins FADD, TNFRSF1A and RIPK1: arginine GlcNAcylation prevents homotypic/heterotypic death domain interactions and assembly of the oligomeric TNF-alpha receptor complex, thereby disrupting TNF signaling. Has preference for host FADD as substrate compared to TNFRSF1A and RIPK1. Also acts on host proteins without a death domain: catalyzes GlcNAcylation of host GAPDH protein, thereby preventing GAPDH interaction with TRAF2 and TRAF3, leading to inhibit NF-kappa-B signaling and type I interferon production, respectively. Also displays intra-bacterial activity by mediating GlcNAcylation of glutathione synthetase GshB. Catalyzes auto-GlcNAcylation, which is required for activity toward death domain-containing host target proteins. The protein is Protein-arginine N-acetylglucosaminyltransferase NleB of Citrobacter rodentium.